Consider the following 192-residue polypeptide: Ion-translocating oxidoreductase complex subunit B (192 aa).

The segment at 1–26 is hydrophobic; that stretch reads MNTIWIAVGALTLLGLVFGAILGYAS. The 60-residue stretch at 32–91 folds into the 4Fe-4S domain; that stretch reads EDDPVVEKIDAILPQSQCGQCGYPGCRPYAEAVGLQGEKINRCAPGGEAVMLKIAELLNV. [4Fe-4S] cluster-binding residues include C49, C52, C57, C74, C117, C120, C123, C127, C147, C150, C153, and C157. 2 consecutive 4Fe-4S ferredoxin-type domains span residues 108-137 and 138-167; these read MLAV…GATR and AMHT…LRPV.

The protein belongs to the 4Fe4S bacterial-type ferredoxin family. RnfB subfamily. In terms of assembly, the complex is composed of six subunits: RsxA, RsxB, RsxC, RsxD, RsxE and RsxG. [4Fe-4S] cluster serves as cofactor.

Its subcellular location is the cell inner membrane. Its function is as follows. Part of a membrane-bound complex that couples electron transfer with translocation of ions across the membrane. Required to maintain the reduced state of SoxR. This is Ion-translocating oxidoreductase complex subunit B from Salmonella dublin (strain CT_02021853).